A 347-amino-acid chain; its full sequence is Methylthioribose-1-phosphate isomerase (347 aa).

Substrate contacts are provided by residues 46–48 (RGA), arginine 89, and glutamine 196. Catalysis depends on aspartate 237, which acts as the Proton donor. 247 to 248 (NK) provides a ligand contact to substrate.

The protein belongs to the eIF-2B alpha/beta/delta subunits family. MtnA subfamily.

It catalyses the reaction 5-(methylsulfanyl)-alpha-D-ribose 1-phosphate = 5-(methylsulfanyl)-D-ribulose 1-phosphate. The protein operates within amino-acid biosynthesis; L-methionine biosynthesis via salvage pathway; L-methionine from S-methyl-5-thio-alpha-D-ribose 1-phosphate: step 1/6. Functionally, catalyzes the interconversion of methylthioribose-1-phosphate (MTR-1-P) into methylthioribulose-1-phosphate (MTRu-1-P). The sequence is that of Methylthioribose-1-phosphate isomerase from Chloroflexus aurantiacus (strain ATCC 29366 / DSM 635 / J-10-fl).